A 182-amino-acid chain; its full sequence is Prorelaxin (182 aa).

An N-terminal signal peptide occupies residues 1-24 (MPRLFSYLLGVWLLLSQLPREIPG). Glutamine 25 is subject to Pyrrolidone carboxylic acid. 3 disulfides stabilise this stretch: cysteine 34-cysteine 169, cysteine 46-cysteine 182, and cysteine 168-cysteine 173. Positions 57 to 154 (SLEEPQLETG…LKNLGLDKHS (98 aa)) are cleaved as a propeptide — connecting peptide. The propeptide occupies 159–160 (LF).

The protein belongs to the insulin family. Heterodimer of a B chain and an A chain linked by two disulfide bonds.

The protein resides in the secreted. Its function is as follows. Relaxin is an ovarian hormone that acts with estrogen to produce dilatation of the birth canal in many mammals. The polypeptide is Prorelaxin (RLN) (Sus scrofa (Pig)).